Consider the following 183-residue polypeptide: Putative manganese efflux pump MntP 1 (183 aa).

Helical transmembrane passes span 6–26, 36–56, 64–84, 100–120, 130–150, and 158–178; these read LFLL…CIGI, MIFV…GGYI, IVPI…ILMI, IMYL…GFTT, LFMS…LGII, and ISII…LFGL.

It belongs to the MntP (TC 9.B.29) family.

Its subcellular location is the cell membrane. Functionally, probably functions as a manganese efflux pump. This is Putative manganese efflux pump MntP 1 from Clostridium botulinum (strain Hall / ATCC 3502 / NCTC 13319 / Type A).